The following is a 679-amino-acid chain: PHD finger protein PERSISTENT TAPETAL CELL 1 (679 aa).

The PHD-type zinc-finger motif lies at 620–670 (VVDCACGAVDDDGERMACCDICEAWQHTRCAGIADTEDAPHVFLCSRCDND).

Probable transcriptional activator required for tapetal programmed cell death (PCD) and degeneration, and pollen development in anthers. The polypeptide is PHD finger protein PERSISTENT TAPETAL CELL 1 (Oryza sativa subsp. japonica (Rice)).